A 162-amino-acid chain; its full sequence is Ribosome maturation factor RimM (162 aa).

The region spanning 86–160 (EGRYYYFALI…SIHVDPIPGL (75 aa)) is the PRC barrel domain.

It belongs to the RimM family. In terms of assembly, binds ribosomal protein uS19.

The protein localises to the cytoplasm. Functionally, an accessory protein needed during the final step in the assembly of 30S ribosomal subunit, possibly for assembly of the head region. Essential for efficient processing of 16S rRNA. May be needed both before and after RbfA during the maturation of 16S rRNA. It has affinity for free ribosomal 30S subunits but not for 70S ribosomes. The protein is Ribosome maturation factor RimM of Thermus thermophilus (strain ATCC 27634 / DSM 579 / HB8).